Here is a 262-residue protein sequence, read N- to C-terminus: Hydroxyethylthiazole kinase (262 aa).

Residue Met-39 coordinates substrate. Lys-115 and Thr-160 together coordinate ATP. Substrate is bound at residue Gly-187.

It belongs to the Thz kinase family. Requires Mg(2+) as cofactor.

The catalysed reaction is 5-(2-hydroxyethyl)-4-methylthiazole + ATP = 4-methyl-5-(2-phosphooxyethyl)-thiazole + ADP + H(+). The protein operates within cofactor biosynthesis; thiamine diphosphate biosynthesis; 4-methyl-5-(2-phosphoethyl)-thiazole from 5-(2-hydroxyethyl)-4-methylthiazole: step 1/1. Catalyzes the phosphorylation of the hydroxyl group of 4-methyl-5-beta-hydroxyethylthiazole (THZ). In Staphylococcus epidermidis (strain ATCC 35984 / DSM 28319 / BCRC 17069 / CCUG 31568 / BM 3577 / RP62A), this protein is Hydroxyethylthiazole kinase.